The following is a 567-amino-acid chain: GBF-interacting protein 1 (567 aa).

Disordered regions lie at residues 70–150, 164–192, and 545–567; these read ERKK…PSGI, DKVD…SKES, and PIGP…GNNY. 2 stretches are compositionally biased toward polar residues: residues 91–102 and 121–136; these read FASSYTDASNGR and TASS…TKPS. Over residues 182-191 the composition is skewed to basic and acidic residues; the sequence is DVVEPDKSKE. The segment covering 550 to 567 has biased composition (polar residues); it reads HVTNQQPQAARTNLGNNY.

It belongs to the GIP1 family. In terms of assembly, monomer, homodimer, homooligomer. Under non-reducing conditions, predominantly present in high molecular weight forms, but predominates in low molecular weight monomers under reducing conditions. Interacts with BZIP16, BZIP68 and GBF1. Interacts with LBD18. Expressed in roots, leaves, stems and flowers.

It localises to the nucleus. Its function is as follows. Plant specific protein that enhances G-box-binding factor (GBF) DNA binding activity. May function as a nuclear chaperone or lever and regulate the multimeric state of GBFs. May contribute to bZIP-mediated gene regulation. Is able to refold denatured rhodanese in vitro. Reduces DNA-binding activity of BZIP16, BZIP68 and GBF1 under non-reducing conditions through direct physical interaction. Acts as a negative co-regulator in red and blue light-mediated hypocotyl elongation. Functions to promote hypocotyl elongation during the early stages of seedling development by regulating the repression effect by BZIP16 and the activation effect by BZIP68 and GBF1 on LHCB2.4 expression. Enhances transcriptional activity of LBD18 in the EXP14 promoter. May act as a transcriptional coactivator of LBD18. This Arabidopsis thaliana (Mouse-ear cress) protein is GBF-interacting protein 1.